The primary structure comprises 442 residues: Elongation factor 1-alpha (442 aa).

Residues 5–228 enclose the tr-type G domain; that stretch reads KTHINIVVIG…DSVTPPERPV (224 aa). Residues 14-21 are G1; sequence GHVDSGKS. 14–21 contacts GTP; it reads GHVDSGKS. Residues 70 to 74 are G2; it reads GITID. Residues 91–94 are G3; sequence DAPG. Residues 91–95 and 153–156 each bind GTP; these read DAPGH and NKMD. Residues 153-156 form a G4 region; sequence NKMD. Residues 192-194 are G5; that stretch reads SGF.

Belongs to the TRAFAC class translation factor GTPase superfamily. Classic translation factor GTPase family. EF-Tu/EF-1A subfamily.

It localises to the cytoplasm. Its function is as follows. This protein promotes the GTP-dependent binding of aminoacyl-tRNA to the A-site of ribosomes during protein biosynthesis. In Entamoeba histolytica (strain ATCC 30459 / HM-1:IMSS / ABRM), this protein is Elongation factor 1-alpha.